Consider the following 396-residue polypeptide: Elongation factor Tu (396 aa).

The region spanning 10–206 (KPHVNVGTIG…ALDTYIPLPE (197 aa)) is the tr-type G domain. The tract at residues 19–26 (GHVDHGKT) is G1. 19–26 (GHVDHGKT) contributes to the GTP binding site. Threonine 26 is a binding site for Mg(2+). The segment at 60–64 (GITIN) is G2. The tract at residues 81 to 84 (DCPG) is G3. GTP-binding positions include 81–85 (DCPGH) and 136–139 (NKCD). A G4 region spans residues 136–139 (NKCD). Residues 174–176 (SAK) are G5.

This sequence belongs to the TRAFAC class translation factor GTPase superfamily. Classic translation factor GTPase family. EF-Tu/EF-1A subfamily. In terms of assembly, monomer.

It is found in the cytoplasm. The catalysed reaction is GTP + H2O = GDP + phosphate + H(+). In terms of biological role, GTP hydrolase that promotes the GTP-dependent binding of aminoacyl-tRNA to the A-site of ribosomes during protein biosynthesis. The polypeptide is Elongation factor Tu (Polaromonas sp. (strain JS666 / ATCC BAA-500)).